Reading from the N-terminus, the 192-residue chain is Adenylate kinase (192 aa).

10 to 18 is an ATP binding site; the sequence is GVPGVGGTT.

The protein belongs to the archaeal adenylate kinase family. Monomer.

It localises to the cytoplasm. It carries out the reaction AMP + ATP = 2 ADP. The chain is Adenylate kinase from Methanococcus maripaludis (strain C7 / ATCC BAA-1331).